The following is a 262-amino-acid chain: Small ribosomal subunit protein uS2 (262 aa).

It belongs to the universal ribosomal protein uS2 family.

The polypeptide is Small ribosomal subunit protein uS2 (Roseiflexus sp. (strain RS-1)).